The following is a 270-amino-acid chain: NAD kinase (270 aa).

Catalysis depends on D45, which acts as the Proton acceptor. Residues 45–46 (DG), 121–122 (NE), R147, D149, 160–165 (TAYSKS), and A184 contribute to the NAD(+) site.

This sequence belongs to the NAD kinase family. It depends on a divalent metal cation as a cofactor.

It localises to the cytoplasm. It catalyses the reaction NAD(+) + ATP = ADP + NADP(+) + H(+). In terms of biological role, involved in the regulation of the intracellular balance of NAD and NADP, and is a key enzyme in the biosynthesis of NADP. Catalyzes specifically the phosphorylation on 2'-hydroxyl of the adenosine moiety of NAD to yield NADP. The sequence is that of NAD kinase from Lactobacillus helveticus (strain DPC 4571).